We begin with the raw amino-acid sequence, 201 residues long: MYDGPLQELIDALSRLPGIGPKGAQRIAFHILDAPAEEANELADALREVKEKAKFCKICFNVSSDEVCQYCRDPRRDQSMICVVEESKDVIAVERTRQFRGLYHVLGGAISPLDGKGPADLHIRELCQRLADETVTEVILATNPNLEGEATATYLSRLIAPMGVTVSRLASGLPVGGDLEYADEVTLGRAFEGRLHVGVGA.

The C4-type zinc-finger motif lies at 56–71 (CKICFNVSSDEVCQYC). The 96-residue stretch at 79 to 174 (SMICVVEESK…TVSRLASGLP (96 aa)) folds into the Toprim domain.

It belongs to the RecR family.

Its function is as follows. May play a role in DNA repair. It seems to be involved in an RecBC-independent recombinational process of DNA repair. It may act with RecF and RecO. The chain is Recombination protein RecR from Cutibacterium acnes (strain DSM 16379 / KPA171202) (Propionibacterium acnes).